The chain runs to 341 residues: Protein arginine N-methyltransferase 1 (341 aa).

One can recognise an SAM-dependent MTase PRMT-type domain in the interval 20–315 (ADYYFDSYSH…DCAPFDKNQR (296 aa)). S-adenosyl-L-methionine is bound by residues His33, Arg42, Gly66, Asp88, and Glu117. Residues Glu132 and Glu141 contribute to the active site.

This sequence belongs to the class I-like SAM-binding methyltransferase superfamily. Protein arginine N-methyltransferase family.

Its subcellular location is the nucleus. The protein resides in the cytoplasm. It is found in the cytosol. The catalysed reaction is L-arginyl-[protein] + 2 S-adenosyl-L-methionine = N(omega),N(omega)-dimethyl-L-arginyl-[protein] + 2 S-adenosyl-L-homocysteine + 2 H(+). It carries out the reaction L-arginyl-[protein] + S-adenosyl-L-methionine = N(omega)-methyl-L-arginyl-[protein] + S-adenosyl-L-homocysteine + H(+). Functionally, arginine methyltransferase that methylates the guanidino nitrogens of arginyl residues present in proteins such as ribonucleoproteins and histones. This is Protein arginine N-methyltransferase 1 (prmt1) from Dictyostelium discoideum (Social amoeba).